Consider the following 89-residue polypeptide: Small ribosomal subunit protein uS15 (89 aa).

Belongs to the universal ribosomal protein uS15 family. In terms of assembly, part of the 30S ribosomal subunit. Forms a bridge to the 50S subunit in the 70S ribosome, contacting the 23S rRNA.

In terms of biological role, one of the primary rRNA binding proteins, it binds directly to 16S rRNA where it helps nucleate assembly of the platform of the 30S subunit by binding and bridging several RNA helices of the 16S rRNA. Its function is as follows. Forms an intersubunit bridge (bridge B4) with the 23S rRNA of the 50S subunit in the ribosome. This Leuconostoc mesenteroides subsp. mesenteroides (strain ATCC 8293 / DSM 20343 / BCRC 11652 / CCM 1803 / JCM 6124 / NCDO 523 / NBRC 100496 / NCIMB 8023 / NCTC 12954 / NRRL B-1118 / 37Y) protein is Small ribosomal subunit protein uS15.